A 358-amino-acid polypeptide reads, in one-letter code: Bi-functional coumaroyl CoA and feruloyl CoA ortho-hydroxylase F6H2-2-1 (358 aa).

The Fe2OG dioxygenase domain maps to 200–308; it reads SKESLLMGSR…RISVPVFVNP (109 aa). Residue Y216 participates in 2-oxoglutarate binding. Fe cation-binding residues include H231, D233, and H289. Positions 299 and 301 each coordinate 2-oxoglutarate.

The protein belongs to the iron/ascorbate-dependent oxidoreductase family. L-ascorbate serves as cofactor. The cofactor is Fe(2+). Mostly expressed in underground stems and stems.

The enzyme catalyses (E)-4-coumaroyl-CoA + 2-oxoglutarate + O2 = (E)-2,4-dihydroxycinnamoyl-CoA + succinate + CO2. The catalysed reaction is (E)-feruloyl-CoA + 2-oxoglutarate + O2 = (E)-6-hydroxyferuloyl-CoA + succinate + CO2. Its pathway is phenylpropanoid metabolism. Its function is as follows. 2-oxoglutarate (OG)- and Fe(II)-dependent dioxygenase (2OGD) involved in scopoletin and umbelliferone biosynthesis. Converts feruloyl CoA into 6'-hydroxyferuloyl CoA, and p-coumaroyl CoA into 2,4-dihydroxycinnamoyl-CoA, but has no activity toward caffeoyl-CoA. This chain is Bi-functional coumaroyl CoA and feruloyl CoA ortho-hydroxylase F6H2-2-1, found in Ipomoea batatas (Sweet potato).